A 481-amino-acid polypeptide reads, in one-letter code: MASAASVTSLADEVNCPICQGTLREPVTIDCGHNFCRACLTRYCEIPGPDLEESPTCPLCKEPFRPGSFRPNWQLANVVENIERLQLVSTLGLGEEDVCQEHGEKIYFFCEDDEMQLCVVCREAGEHATHTMRFLEDAAAPYREQIHKCLKRLRKEREETQEIQSRENKRMQVLLTQVSTKRQQVISEFAHLRKFLEEQQSILLAQLESLDGDILKQRDEFDLLIAGESCRFSALIEELEEKNERPARELLTDIRSTLIRCETRKCRKPVAVSPELGQRIRDFPQQALPLQREMKMFLEKLCFELDYEPAHISLDPQTSHPKLLLSEDHQRAQFSYKWQNSPDNPQRFDRATCVLAHTGITGGRHTWVVSIDLAHGGSCTVGVVSEDVQRKGELRLRPEEGVWAVRLAWGFVSALGSFPTRLTLKEQPWQVRVSLDYEVGWVTFTNAVTREPIYTFTASFTRKVIPFFGLWGRGSSFFLSS.

Residues 16–61 (CPICQGTLREPVTIDCGHNFCRACLTRYCEIPGPDLEESPTCPLCK) form an RING-type zinc finger. A B box-type zinc finger spans residues 94-135 (GEEDVCQEHGEKIYFFCEDDEMQLCVVCREAGEHATHTMRFL). Zn(2+) is bound by residues cysteine 99, histidine 102, cysteine 121, and histidine 127. Residues 142-177 (YREQIHKCLKRLRKEREETQEIQSRENKRMQVLLTQ) adopt a coiled-coil conformation. Residues 292-481 (REMKMFLEKL…GRGSSFFLSS (190 aa)) enclose the B30.2/SPRY domain.

It belongs to the TRIM/RBCC family. As to quaternary structure, interacts with IFNAR1; this interaction prevents association of IFNAR1 with TYK2.

It localises to the cytoplasm. Functionally, E3 ligase that plays an essential role in the differentiation and survival of terminal erythroid cells. May directly bind to PTEN and promote its ubiquitination, resulting in its proteasomal degradation and activation of hypertrophic signaling. In addition, plays a role in immune response regulation by repressing the phosphorylation of STAT1 and STAT2 in the interferon/JAK/STAT signaling pathway independent of its E3 ligase activity. Mechanistically, interacts with the intracellular domain of IFNAR1 and thereby inhibits the association of TYK2 and IFNAR1. The protein is Tripartite motif-containing protein 10 (TRIM10) of Pan troglodytes (Chimpanzee).